Consider the following 429-residue polypeptide: Adenylosuccinate synthetase (429 aa).

GTP-binding positions include 12 to 18 and 40 to 42; these read GDEGKGK and GHT. Residue D13 is the Proton acceptor of the active site. Residues D13 and G40 each coordinate Mg(2+). Residues 13–16, 38–41, T128, R142, Q223, T238, and R302 contribute to the IMP site; these read DEGK and NAGH. H41 functions as the Proton donor in the catalytic mechanism. Substrate is bound at residue 298–304; that stretch reads TTTGRPR. GTP is bound by residues R304, 330 to 332, and 412 to 414; these read SID and SVG.

It belongs to the adenylosuccinate synthetase family. In terms of assembly, homodimer. The cofactor is Mg(2+).

Its subcellular location is the cytoplasm. It catalyses the reaction IMP + L-aspartate + GTP = N(6)-(1,2-dicarboxyethyl)-AMP + GDP + phosphate + 2 H(+). Its pathway is purine metabolism; AMP biosynthesis via de novo pathway; AMP from IMP: step 1/2. Plays an important role in the de novo pathway of purine nucleotide biosynthesis. Catalyzes the first committed step in the biosynthesis of AMP from IMP. The chain is Adenylosuccinate synthetase from Exiguobacterium sp. (strain ATCC BAA-1283 / AT1b).